A 200-amino-acid polypeptide reads, in one-letter code: NADH-quinone oxidoreductase subunit C (200 aa).

This sequence belongs to the complex I 30 kDa subunit family. As to quaternary structure, NDH-1 is composed of 14 different subunits. Subunits NuoB, C, D, E, F, and G constitute the peripheral sector of the complex.

Its subcellular location is the cell inner membrane. The enzyme catalyses a quinone + NADH + 5 H(+)(in) = a quinol + NAD(+) + 4 H(+)(out). NDH-1 shuttles electrons from NADH, via FMN and iron-sulfur (Fe-S) centers, to quinones in the respiratory chain. The immediate electron acceptor for the enzyme in this species is believed to be ubiquinone. Couples the redox reaction to proton translocation (for every two electrons transferred, four hydrogen ions are translocated across the cytoplasmic membrane), and thus conserves the redox energy in a proton gradient. This is NADH-quinone oxidoreductase subunit C from Paraburkholderia phytofirmans (strain DSM 17436 / LMG 22146 / PsJN) (Burkholderia phytofirmans).